A 329-amino-acid polypeptide reads, in one-letter code: MLSSLNVLQSSFRGKTALSNSTLLQKVSFAGKEYSLEPIDERTPILFQWFEARPERYEKGEVPILNTKEHPYLSNIINAAKIENERIIGVLVDGNFTYEQKKEFLNLENEHQNIKIIYRADVDFSMYDKKLSDIYLENIHKQESYPASERDNYLLGLLREELKNIPEGKDSLIESYAEKREHTWFDFFRNLAILKAGSLFTETGKTGCHNISPCSGCIYLDADMIITDKLGVLYAPDGIAVHVDCNDEIKSLENGAIVVNRSNHPALLAGLDIMKSKVDAHPYYDGLGKGIKRHFNYSSLHNYNAFCDFIEFKHENIIPNTSMYTSSSW.

Arginine 13 carries an N-beta-linked (GlcNAc) arginine; by autocatalysis glycan. Residue glutamine 48–phenylalanine 50 coordinates UDP-N-acetyl-alpha-D-glucosamine. N-beta-linked (GlcNAc) arginine; by autocatalysis glycosylation is present at arginine 53. Tyrosine 72 contacts UDP-N-acetyl-alpha-D-glucosamine. A glycan (N-beta-linked (GlcNAc) arginine; by autocatalysis) is linked at arginine 159. UDP-N-acetyl-alpha-D-glucosamine is bound at residue tyrosine 219 to alanine 222. The DXD motif signature appears at aspartate 221–aspartate 223. Position 223 (aspartate 223) interacts with Mn(2+). Catalysis depends on glutamate 253, which acts as the Proton acceptor. N-beta-linked (GlcNAc) arginine; by autocatalysis glycosylation is present at arginine 293. Residues asparagine 320 and serine 322 each coordinate Mn(2+). Residues serine 322 and serine 327 to tryptophan 329 contribute to the UDP-N-acetyl-alpha-D-glucosamine site.

Belongs to the glycosyltransferase NleB family. Mn(2+) serves as cofactor. In terms of processing, auto-glycosylated: arginine GlcNAcylation is required for activity toward death domain-containing host target proteins.

The protein resides in the secreted. The protein localises to the host cytoplasm. The catalysed reaction is L-arginyl-[protein] + UDP-N-acetyl-alpha-D-glucosamine = N(omega)-(N-acetyl-beta-D-glucosaminyl)-L-arginyl-[protein] + UDP + H(+). Its function is as follows. Protein-arginine N-acetylglucosaminyltransferase effector that disrupts TNF signaling in infected cells, including NF-kappa-B signaling, apoptosis and necroptosis. Acts by catalyzing the transfer of a single N-acetylglucosamine (GlcNAc) to a conserved arginine residue in the death domain of host proteins FADD, TRADD, FAS, TNFRSF1A/TNFR1, TNFRSF25/DR3 and RIPK1: arginine GlcNAcylation prevents homotypic/heterotypic death domain interactions and assembly of the oligomeric TNF-alpha receptor complex, thereby disrupting TNF signaling. Has preference for host FADD as substrate compared to other death domain-containing proteins. Also acts on host proteins without a death domain: catalyzes arginine GlcNAcylation of HIF1A, thereby regulating host glucose metabolism. Also displays intra-bacterial activity by mediating GlcNAcylation of glutathione synthetase GshB. Catalyzes auto-GlcNAcylation, which is required for activity toward death domain-containing host target proteins. Shows a higher enzymatic activity than NleB2. The chain is Protein-arginine N-acetylglucosaminyltransferase NleB1 from Escherichia coli O127:H6 (strain E2348/69 / EPEC).